The primary structure comprises 265 residues: 3-methyl-2-oxobutanoate hydroxymethyltransferase (265 aa).

Mg(2+)-binding residues include D41 and D80. 3-methyl-2-oxobutanoate-binding positions include D41–S42, D80, and K109. E111 is a binding site for Mg(2+). E178 acts as the Proton acceptor in catalysis.

Belongs to the PanB family. In terms of assembly, homodecamer; pentamer of dimers. It depends on Mg(2+) as a cofactor.

Its subcellular location is the cytoplasm. The enzyme catalyses 3-methyl-2-oxobutanoate + (6R)-5,10-methylene-5,6,7,8-tetrahydrofolate + H2O = 2-dehydropantoate + (6S)-5,6,7,8-tetrahydrofolate. The protein operates within cofactor biosynthesis; (R)-pantothenate biosynthesis; (R)-pantoate from 3-methyl-2-oxobutanoate: step 1/2. In terms of biological role, catalyzes the reversible reaction in which hydroxymethyl group from 5,10-methylenetetrahydrofolate is transferred onto alpha-ketoisovalerate to form ketopantoate. The sequence is that of 3-methyl-2-oxobutanoate hydroxymethyltransferase from Thermosipho africanus (strain TCF52B).